The sequence spans 190 residues: NAD(P)H-quinone oxidoreductase subunit I (190 aa).

2 consecutive 4Fe-4S ferredoxin-type domains span residues 55 to 84 (GRIH…VDWT) and 95 to 124 (KHYS…MTEE). 8 residues coordinate [4Fe-4S] cluster: cysteine 64, cysteine 67, cysteine 70, cysteine 74, cysteine 104, cysteine 107, cysteine 110, and cysteine 114. Residues 169-190 (IEPHDLPAGSQRAGKRPEEITD) are disordered.

This sequence belongs to the complex I 23 kDa subunit family. NDH-1 is composed of at least 11 different subunits. It depends on [4Fe-4S] cluster as a cofactor.

It localises to the cellular thylakoid membrane. The enzyme catalyses a plastoquinone + NADH + (n+1) H(+)(in) = a plastoquinol + NAD(+) + n H(+)(out). It carries out the reaction a plastoquinone + NADPH + (n+1) H(+)(in) = a plastoquinol + NADP(+) + n H(+)(out). In terms of biological role, NDH-1 shuttles electrons from an unknown electron donor, via FMN and iron-sulfur (Fe-S) centers, to quinones in the respiratory and/or the photosynthetic chain. The immediate electron acceptor for the enzyme in this species is believed to be plastoquinone. Couples the redox reaction to proton translocation, and thus conserves the redox energy in a proton gradient. The polypeptide is NAD(P)H-quinone oxidoreductase subunit I (Microcystis aeruginosa (strain NIES-843 / IAM M-2473)).